The following is a 126-amino-acid chain: Histone H2B type 1-D (126 aa).

Positions 1 to 12 are enriched in low complexity; it reads MPEPTKSAPAPK. Positions 1–36 are disordered; it reads MPEPTKSAPAPKKGSKKAVTKAQKKDGKKRKRSRKE. Position 2 is an N-acetylproline (P2). Residue E3 is modified to ADP-ribosyl glutamic acid. An N6-(2-hydroxyisobutyryl)lysine; alternate modification is found at K6. Residue K6 is modified to N6-(beta-hydroxybutyryl)lysine; alternate. Residue K6 is modified to N6-acetyllysine; alternate. An N6-butyryllysine; alternate modification is found at K6. At K6 the chain carries N6-crotonyllysine; alternate. Residue K6 is modified to N6-lactoyllysine; alternate. Residue K6 forms a Glycyl lysine isopeptide (Lys-Gly) (interchain with G-Cter in SUMO2); alternate linkage. Residue S7 is modified to ADP-ribosylserine. K12 is subject to N6-(beta-hydroxybutyryl)lysine; alternate. K12 and K13 each carry N6-acetyllysine; alternate. 2 positions are modified to N6-crotonyllysine; alternate: K12 and K13. N6-lactoyllysine; alternate is present on K12. At K13 the chain carries N6-(2-hydroxyisobutyryl)lysine; alternate. Phosphoserine; by STK4/MST1 is present on S15. An N6-acetyllysine; alternate mark is found at K16, K17, K21, and K24. Residues K16, K17, K21, and K24 each carry the N6-crotonyllysine; alternate modification. 4 positions are modified to N6-lactoyllysine; alternate: K16, K17, K21, and K24. An N6-(beta-hydroxybutyryl)lysine; alternate mark is found at K17 and K21. The residue at position 17 (K17) is an N6-glutaryllysine; alternate. 2 positions are modified to N6-(2-hydroxyisobutyryl)lysine; alternate: K21 and K24. Residue K21 is modified to N6-butyryllysine; alternate. K21 is covalently cross-linked (Glycyl lysine isopeptide (Lys-Gly) (interchain with G-Cter in SUMO2); alternate). K25 is modified (N6-(2-hydroxyisobutyryl)lysine). Residue K35 is modified to N6-(2-hydroxyisobutyryl)lysine; alternate. K35 carries the N6-(beta-hydroxybutyryl)lysine; alternate modification. At K35 the chain carries N6-crotonyllysine; alternate. K35 carries the N6-glutaryllysine; alternate modification. K35 is modified (N6-succinyllysine; alternate). A Glycyl lysine isopeptide (Lys-Gly) (interchain with G-Cter in ubiquitin); alternate cross-link involves residue K35. Position 36 is a polyADP-ribosyl glutamic acid (E36). S37 is subject to Phosphoserine; by AMPK. N6-(2-hydroxyisobutyryl)lysine; alternate is present on residues K44, K47, and K58. K44 is modified (N6-lactoyllysine; alternate). An N6-glutaryllysine; alternate mark is found at K44 and K47. N6-methyllysine; alternate is present on K47. K58 is subject to N6,N6-dimethyllysine; alternate. A Dimethylated arginine modification is found at R80. K86 carries the N6-(2-hydroxyisobutyryl)lysine; alternate modification. N6-(beta-hydroxybutyryl)lysine; alternate is present on K86. Residue K86 is modified to N6-acetyllysine; alternate. N6-lactoyllysine; alternate is present on K86. K86 is modified (N6,N6,N6-trimethyllysine; alternate). 2 positions are modified to omega-N-methylarginine: R87 and R93. K109 carries the post-translational modification N6-(2-hydroxyisobutyryl)lysine; alternate. Residue K109 is modified to N6-lactoyllysine; alternate. K109 carries the N6-glutaryllysine; alternate modification. The residue at position 109 (K109) is an N6-methyllysine; alternate. O-linked (GlcNAc) serine glycosylation is present at S113. T116 is subject to Phosphothreonine. Residues K117 and K121 each carry the N6-(2-hydroxyisobutyryl)lysine; alternate modification. 2 positions are modified to N6-(beta-hydroxybutyryl)lysine; alternate: K117 and K121. An N6-lactoyllysine; alternate mark is found at K117 and K121. N6-glutaryllysine; alternate is present on residues K117 and K121. N6-succinyllysine; alternate is present on residues K117 and K121. K117 bears the N6-malonyllysine; alternate mark. K117 carries the post-translational modification N6-methylated lysine; alternate. Residue K121 forms a Glycyl lysine isopeptide (Lys-Gly) (interchain with G-Cter in ubiquitin); alternate linkage.

This sequence belongs to the histone H2B family. As to quaternary structure, the nucleosome is a histone octamer containing two molecules each of H2A, H2B, H3 and H4 assembled in one H3-H4 heterotetramer and two H2A-H2B heterodimers. The octamer wraps approximately 147 bp of DNA. Post-translationally, monoubiquitination at Lys-35 (H2BK34Ub) by the MSL1/MSL2 dimer is required for histone H3 'Lys-4' (H3K4me) and 'Lys-79' (H3K79me) methylation and transcription activation at specific gene loci, such as HOXA9 and MEIS1 loci. Similarly, monoubiquitination at Lys-121 (H2BK120Ub) by the RNF20/40 complex gives a specific tag for epigenetic transcriptional activation and is also prerequisite for histone H3 'Lys-4' and 'Lys-79' methylation. It also functions cooperatively with the FACT dimer to stimulate elongation by RNA polymerase II. H2BK120Ub also acts as a regulator of mRNA splicing: deubiquitination by USP49 is required for efficient cotranscriptional splicing of a large set of exons. Phosphorylation at Ser-37 (H2BS36ph) by AMPK in response to stress promotes transcription. Phosphorylated on Ser-15 (H2BS14ph) by STK4/MST1 during apoptosis; which facilitates apoptotic chromatin condensation. Also phosphorylated on Ser-15 in response to DNA double strand breaks (DSBs), and in correlation with somatic hypermutation and immunoglobulin class-switch recombination. In terms of processing, glcNAcylation at Ser-113 promotes monoubiquitination of Lys-121. It fluctuates in response to extracellular glucose, and associates with transcribed genes. Post-translationally, ADP-ribosylated by PARP1 or PARP2 on Ser-7 (H2BS6ADPr) in response to DNA damage. H2BS6ADPr promotes recruitment of CHD1L. Mono-ADP-ribosylated on Glu-3 (H2BE2ADPr) by PARP3 in response to single-strand breaks. Poly ADP-ribosylation on Glu-36 (H2BE35ADPr) by PARP1 regulates adipogenesis: it inhibits phosphorylation at Ser-37 (H2BS36ph), thereby blocking expression of pro-adipogenetic genes. Crotonylation (Kcr) is specifically present in male germ cells and marks testis-specific genes in post-meiotic cells, including X-linked genes that escape sex chromosome inactivation in haploid cells. Crotonylation marks active promoters and enhancers and confers resistance to transcriptional repressors. It is also associated with post-meiotically activated genes on autosomes. In terms of processing, lactylated in macrophages by EP300/P300 by using lactoyl-CoA directly derived from endogenous or exogenous lactate, leading to stimulates gene transcription.

The protein resides in the nucleus. It is found in the chromosome. Core component of nucleosome. Nucleosomes wrap and compact DNA into chromatin, limiting DNA accessibility to the cellular machineries which require DNA as a template. Histones thereby play a central role in transcription regulation, DNA repair, DNA replication and chromosomal stability. DNA accessibility is regulated via a complex set of post-translational modifications of histones, also called histone code, and nucleosome remodeling. This Homo sapiens (Human) protein is Histone H2B type 1-D.